The following is a 437-amino-acid chain: Asparagine--tRNA ligase (437 aa).

It belongs to the class-II aminoacyl-tRNA synthetase family. Homodimer.

It is found in the cytoplasm. The enzyme catalyses tRNA(Asn) + L-asparagine + ATP = L-asparaginyl-tRNA(Asn) + AMP + diphosphate + H(+). This is Asparagine--tRNA ligase from Symbiobacterium thermophilum (strain DSM 24528 / JCM 14929 / IAM 14863 / T).